The chain runs to 326 residues: ELMO domain-containing protein 1 (326 aa).

The ELMO domain occupies 133-306 (QHEEMLLKLW…KFRKRIIKQL (174 aa)).

In terms of biological role, acts as a GTPase-activating protein (GAP) toward guanine nucleotide exchange factors like ARL2, ARL3, ARF1 and ARF6, but not for GTPases outside the Arf family. This Bos taurus (Bovine) protein is ELMO domain-containing protein 1 (ELMOD1).